We begin with the raw amino-acid sequence, 488 residues long: BRAP2 RING ZnF UBP domain-containing protein 1 (488 aa).

An RING-type; degenerate zinc finger spans residues 174-214; the sequence is CPICLERLDPDTSGIVSTLCDHSFQCSCTSKWTYLSCQVCR. Residues 208-301 form a UBP-type; degenerate zinc finger; sequence LSCQVCRLCQ…GKSVEMSTSC (94 aa). Zn(2+)-binding residues include cysteine 225, cysteine 228, cysteine 237, cysteine 240, cysteine 245, histidine 252, histidine 256, and histidine 262. A coiled-coil region spans residues 370 to 418; the sequence is EQIVVNTMQELQNKIEKCEEEKSGITEVNTKLIKEQDTWRKKAKEIEER. The disordered stretch occupies residues 453–488; it reads MSSDTDGIREGTVLPVPISPEPVSSVRRQKKSNRRK. Residues 465–478 show a composition bias toward low complexity; sequence VLPVPISPEPVSSV. The span at 479 to 488 shows a compositional bias: basic residues; that stretch reads RRQKKSNRRK.

As to quaternary structure, component of the heteromeric E3 ligase complex made of BRIZ1 and BRIZ2. Forms heterooligomers with BRIZ2 via coiled-coil domains.

It carries out the reaction S-ubiquitinyl-[E2 ubiquitin-conjugating enzyme]-L-cysteine + [acceptor protein]-L-lysine = [E2 ubiquitin-conjugating enzyme]-L-cysteine + N(6)-ubiquitinyl-[acceptor protein]-L-lysine.. The protein operates within protein modification; protein ubiquitination. RING-type ubiquitin E3 ligase required for seed germination and post-germination growth. The polypeptide is BRAP2 RING ZnF UBP domain-containing protein 1 (Arabidopsis thaliana (Mouse-ear cress)).